A 111-amino-acid chain; its full sequence is Small ribosomal subunit protein uS15c (111 aa).

The protein belongs to the universal ribosomal protein uS15 family. Part of the 30S ribosomal subunit.

It localises to the plastid. The protein resides in the chloroplast. The polypeptide is Small ribosomal subunit protein uS15c (rps15) (Staurastrum punctulatum (Green alga)).